The primary structure comprises 197 residues: Protein Hikeshi (197 aa).

The required for F-X-F-G repeats-nucleoporins recognition and nuclear import stretch occupies residues valine 18 to tyrosine 55. The tract at residues glutamine 124 to serine 134 is flexible linker region involved in nuclear import of HSP70 proteins.

The protein belongs to the OPI10 family. Forms an asymmetric homodimer; required for binding and nuclear import of HSP70 proteins. Interacts with ATP-bound HSP70 proteins. Interacts with NUP62 and NUP153 (via F-X-F-G repeats). Interacts with HSPA8.

Its subcellular location is the cytoplasm. It localises to the cytosol. The protein localises to the nucleus. Its function is as follows. Acts as a specific nuclear import carrier for HSP70 proteins following heat-shock stress: acts by mediating the nucleoporin-dependent translocation of ATP-bound HSP70 proteins into the nucleus. HSP70 proteins import is required to protect cells from heat shock damages. Does not translocate ADP-bound HSP70 proteins into the nucleus. The sequence is that of Protein Hikeshi from Homo sapiens (Human).